Reading from the N-terminus, the 86-residue chain is Cardiotoxin homolog TA-ctx-like (86 aa).

Residues 1-21 form the signal peptide; the sequence is MKTLLLTLVVLTIACLDLGYT. 4 disulfides stabilise this stretch: Cys-24–Cys-45, Cys-38–Cys-62, Cys-66–Cys-78, and Cys-79–Cys-84.

The protein belongs to the three-finger toxin family. Short-chain subfamily. Orphan group IX sub-subfamily. In terms of tissue distribution, expressed by the venom gland.

The protein resides in the secreted. In Bungarus multicinctus (Many-banded krait), this protein is Cardiotoxin homolog TA-ctx-like.